Consider the following 229-residue polypeptide: MKKFSRRLTTLKSKVEPKLYTINEAVSILKATSNAKFKETAEAHIALGLNPKYADQQLRATVILPKGTGKLIKVAVIAKGEKLTEAISAGADVSGSEELIDEILKGRLDFDKLIATPDVMPLIAKLGRVLGPRGLMPSPKAGTVTLDVAKAVNEFKGGKVEYRVDRTGIIHVPFGKSSFSQEDLVLNLQTIKESIDRNKPSGAKGKYWKTFFLSSTMGPSIQIDITSLL.

This sequence belongs to the universal ribosomal protein uL1 family. As to quaternary structure, part of the 50S ribosomal subunit.

It is found in the plastid. The protein resides in the chloroplast. Functionally, binds directly to 23S rRNA. Might be involved in E site tRNA release (Potential). The chain is Large ribosomal subunit protein uL1c (rpl1) from Pyropia yezoensis (Susabi-nori).